The sequence spans 393 residues: Small RNA 2'-O-methyltransferase (393 aa).

S-adenosyl-L-methionine contacts are provided by Ser-60, Asp-78, and Ser-114. Mg(2+)-binding residues include Glu-132, Glu-135, His-136, and His-181. Residues 283–309 (RVSHLPRRKEQDGEQGDKPKDIGGSKA) form a disordered region. A compositionally biased stretch (basic and acidic residues) spans 290 to 305 (RKEQDGEQGDKPKDIG).

It belongs to the methyltransferase superfamily. HEN1 family. Requires Mg(2+) as cofactor.

The protein resides in the cytoplasm. It catalyses the reaction small RNA 3'-end nucleotide + S-adenosyl-L-methionine = small RNA 3'-end 2'-O-methylnucleotide + S-adenosyl-L-homocysteine + H(+). In terms of biological role, methyltransferase that adds a 2'-O-methyl group at the 3'-end of piRNAs, a class of 24 to 30 nucleotide RNAs that are generated by a Dicer-independent mechanism and are primarily derived from transposons and other repeated sequence elements. This probably protects the 3'-end of piRNAs from uridylation activity and subsequent degradation. Stabilization of piRNAs is essential for gametogenesis. The chain is Small RNA 2'-O-methyltransferase (HENMT1) from Macaca fascicularis (Crab-eating macaque).